We begin with the raw amino-acid sequence, 1304 residues long: Probable inactive serine/threonine-protein kinase fnkC (1304 aa).

Residues phenylalanine 33–isoleucine 402 form the Protein kinase domain. Residues leucine 39–threonine 47 and lysine 68 contribute to the ATP site. The tract at residues lysine 208 to glutamate 277 is disordered. Over residues asparagine 210 to alanine 269 the composition is skewed to low complexity. 5 FNIP repeats span residues histidine 514–aspartate 556, phenylalanine 710–cysteine 753, phenylalanine 754–glutamine 797, tyrosine 798–serine 841, and tyrosine 900–aspartate 943. 2 consecutive MATH domains span residues glutamine 1025–alanine 1154 and asparagine 1172–isoleucine 1291.

It belongs to the protein kinase superfamily. STE Ser/Thr protein kinase family.

The chain is Probable inactive serine/threonine-protein kinase fnkC (fnkC) from Dictyostelium discoideum (Social amoeba).